A 769-amino-acid chain; its full sequence is Amino-acid acetyltransferase, mitochondrial (769 aa).

The segment at 150–172 (LKASPAKSGQEPTESPKESISAS) is disordered. The span at 159-172 (QEPTESPKESISAS) shows a compositional bias: polar residues. An N-acetyltransferase domain is found at 590-759 (MQPRLGLNDP…YEAVCRSIQP (170 aa)).

The protein belongs to the acetyltransferase family.

It is found in the mitochondrion. The catalysed reaction is L-glutamate + acetyl-CoA = N-acetyl-L-glutamate + CoA + H(+). It participates in amino-acid biosynthesis; L-arginine biosynthesis; N(2)-acetyl-L-ornithine from L-glutamate: step 1/4. N-acetylglutamate synthase involved in arginine biosynthesis. The chain is Amino-acid acetyltransferase, mitochondrial (arg2) from Penicillium rubens (strain ATCC 28089 / DSM 1075 / NRRL 1951 / Wisconsin 54-1255) (Penicillium chrysogenum).